Here is a 578-residue protein sequence, read N- to C-terminus: Forkhead box protein P1 (578 aa).

The C2H2-type zinc-finger motif lies at 208 to 233 (GVCKWPGCETICEDFPSFLKHLNSEH). Residues 250-271 (VQQLELQLSKDKERLQAMMSHL) are leucine-zipper. Positions 284–288 (PLNLV) are ctbp1-binding. Polar residues predominate over residues 293–305 (LSKTASEASPQSL). Residues 293-325 (LSKTASEASPQSLPHTPTTPTAPLTPITQGPSV) are disordered. Residues 306–320 (PHTPTTPTAPLTPIT) show a composition bias toward low complexity. The segment at residues 366 to 456 (RPPFTYASLI…PQKISGSPTL (91 aa)) is a DNA-binding region (fork-head). The segment at 511–578 (MEHTSSNGSD…EDDPVNDDME (68 aa)) is disordered. Over residues 515–527 (SSNGSDSSPGRSP) the composition is skewed to low complexity. Positions 568–578 (YEDDPVNDDME) are enriched in acidic residues.

Dimerization is required for DNA-binding. Isoform a, but not isoform b, interacts with ctbp1. All isoforms show similar spatial expression. Localized to the animal hemisphere of early cleavage stage embryos. At tailbud stages, expressed in regions of the brain, eye and the splanchnic mesodermal layer of the lateral plate mesoderm surrounding the gut. At stage 35, expressed within the lens of the eye, in distinct regions of the head mesenchyme and in the area anterior to the gut. In the brain the anterior-most expression is restricted to the outer region of the mesencephalon. With ongoing development, additional expression is found in the curling gut.

The protein localises to the nucleus. In terms of biological role, transcriptional repressor. In Xenopus laevis (African clawed frog), this protein is Forkhead box protein P1.